The sequence spans 441 residues: tRNA modification GTPase MnmE (441 aa).

Arginine 23, glutamate 81, and arginine 121 together coordinate (6S)-5-formyl-5,6,7,8-tetrahydrofolate. The region spanning 219–366 (GFTVVLAGAP…LLDAIQAAAE (148 aa)) is the TrmE-type G domain. GTP-binding positions include 229-234 (NSGKST), 248-254 (SDSPGTT), and 273-276 (DTAG). Positions 233 and 254 each coordinate Mg(2+). Lysine 441 is a (6S)-5-formyl-5,6,7,8-tetrahydrofolate binding site.

This sequence belongs to the TRAFAC class TrmE-Era-EngA-EngB-Septin-like GTPase superfamily. TrmE GTPase family. As to quaternary structure, homodimer. Heterotetramer of two MnmE and two MnmG subunits. It depends on K(+) as a cofactor.

The protein resides in the cytoplasm. In terms of biological role, exhibits a very high intrinsic GTPase hydrolysis rate. Involved in the addition of a carboxymethylaminomethyl (cmnm) group at the wobble position (U34) of certain tRNAs, forming tRNA-cmnm(5)s(2)U34. This is tRNA modification GTPase MnmE from Methylobacterium radiotolerans (strain ATCC 27329 / DSM 1819 / JCM 2831 / NBRC 15690 / NCIMB 10815 / 0-1).